Reading from the N-terminus, the 141-residue chain is Putative pre-16S rRNA nuclease (141 aa).

Belongs to the YqgF nuclease family.

It localises to the cytoplasm. In terms of biological role, could be a nuclease involved in processing of the 5'-end of pre-16S rRNA. The chain is Putative pre-16S rRNA nuclease from Desulforudis audaxviator (strain MP104C).